The sequence spans 263 residues: Glutamate 5-kinase (263 aa).

An ATP-binding site is contributed by Lys14. Ser52, Asp137, and Asn149 together coordinate substrate. ATP is bound by residues 169–170 and 211–217; these read SD and TGGIVTK.

Belongs to the glutamate 5-kinase family. In terms of assembly, homotetramer; oligomerization is not affected by L-proline feedback inhibition. The cofactor is Mg(2+).

The enzyme catalyses L-glutamate + ATP = L-glutamyl 5-phosphate + ADP. It functions in the pathway amino-acid biosynthesis; L-proline biosynthesis; L-glutamate 5-semialdehyde from L-glutamate: step 1/2. With respect to regulation, inhibited by L-proline as part of a negative feedback loop. Also inhibited by L-proline analogs 3,4-dehydro-L-proline, L-azetidine-2-carboxylic acid and L-4-thiazolidine carboxylic acid. Catalyzes the transfer of a phosphate group to glutamate to form L-glutamate 5-phosphate. May be important for growth and survival. In Leishmania donovani, this protein is Glutamate 5-kinase.